The sequence spans 389 residues: Chalcone synthase (389 aa).

Catalysis depends on residues C164, H303, and N336.

It belongs to the thiolase-like superfamily. Chalcone/stilbene synthases family. In terms of assembly, homodimer. In terms of tissue distribution, mainly expressed in flowers, to a lower extent in young leaves, and barely in mature leaves and twigs.

The catalysed reaction is (E)-4-coumaroyl-CoA + 3 malonyl-CoA + 3 H(+) = 2',4,4',6'-tetrahydroxychalcone + 3 CO2 + 4 CoA. Its pathway is secondary metabolite biosynthesis; flavonoid biosynthesis. The primary product of this enzyme is 4,2',4',6'-tetrahydroxychalcone (also termed naringenin-chalcone or chalcone) which can under specific conditions spontaneously isomerize into naringenin. In Rhododendron dauricum (Azalea daurica), this protein is Chalcone synthase.